A 373-amino-acid chain; its full sequence is LIM domain-binding protein 2 (373 aa).

2 disordered regions span residues 244-291 (APPA…ANLS) and 327-373 (QYDA…QASQ). The segment covering 263–280 (STSSTSNSSAGNNANSTG) has biased composition (low complexity). In terms of domain architecture, LIM interaction domain (LID) spans 298–337 (DVMVVGEPTLMGGEFGDEDERLITRLENTQYDAANGMDDE). Polar residues predominate over residues 341–361 (NNSPALGNNSPWNSKPPATQE).

It belongs to the LDB family. Interacts with LHX9. Interacts with SLK; leading to negatively regulate SLK kinase activity. Interacts with LMO4. Ubiquitinated by RLIM/RNF12, leading to its degradation by the proteasome.

The protein localises to the nucleus. In terms of biological role, transcription cofactor. Binds to the LIM domain of a wide variety of LIM domain-containing transcription factors. This is LIM domain-binding protein 2 (LDB2) from Homo sapiens (Human).